The primary structure comprises 490 residues: ATP synthase subunit alpha 1 (490 aa).

Residue 171 to 178 (GDNGLGKS) coordinates ATP.

This sequence belongs to the ATPase alpha/beta chains family. As to quaternary structure, F-type ATPases have 2 components, CF(1) - the catalytic core - and CF(0) - the membrane proton channel. CF(1) has five subunits: alpha(3), beta(3), gamma(1), delta(1), epsilon(1). CF(0) has three main subunits: a(1), b(2) and c(9-12). The alpha and beta chains form an alternating ring which encloses part of the gamma chain. CF(1) is attached to CF(0) by a central stalk formed by the gamma and epsilon chains, while a peripheral stalk is formed by the delta and b chains.

It localises to the cell inner membrane. The enzyme catalyses ATP + H2O + 4 H(+)(in) = ADP + phosphate + 5 H(+)(out). In terms of biological role, produces ATP from ADP in the presence of a proton gradient across the membrane. The alpha chain is a regulatory subunit. The sequence is that of ATP synthase subunit alpha 1 from Legionella pneumophila (strain Corby).